Here is a 122-residue protein sequence, read N- to C-terminus: NADH-quinone oxidoreductase subunit A (122 aa).

A run of 3 helical transmembrane segments spans residues 10–30 (MIVLIFLLLGILLPVVALTLG), 66–86 (IFALLFVIFDVETLFLYPWAV), and 91–111 (LGLFALIEMLIFVVMLLVGLA).

It belongs to the complex I subunit 3 family. NDH-1 is composed of 14 different subunits. Subunits NuoA, H, J, K, L, M, N constitute the membrane sector of the complex.

The protein resides in the cell membrane. The enzyme catalyses a quinone + NADH + 5 H(+)(in) = a quinol + NAD(+) + 4 H(+)(out). Functionally, NDH-1 shuttles electrons from NADH, via FMN and iron-sulfur (Fe-S) centers, to quinones in the respiratory chain. The immediate electron acceptor for the enzyme in this species is believed to be a menaquinone. Couples the redox reaction to proton translocation (for every two electrons transferred, four hydrogen ions are translocated across the cytoplasmic membrane), and thus conserves the redox energy in a proton gradient. This chain is NADH-quinone oxidoreductase subunit A, found in Bacillus cereus (strain ATCC 14579 / DSM 31 / CCUG 7414 / JCM 2152 / NBRC 15305 / NCIMB 9373 / NCTC 2599 / NRRL B-3711).